The chain runs to 215 residues: Oligoribonuclease (215 aa).

Positions 5 to 170 (LVWIDCEMTG…ADIHESIREL (166 aa)) constitute an Exonuclease domain. The active site involves Tyr127. A disordered region spans residues 196–215 (LDEGKDAPGPSDSASAPPTG). Low complexity predominate over residues 202–215 (APGPSDSASAPPTG).

This sequence belongs to the oligoribonuclease family.

The protein resides in the cytoplasm. In terms of biological role, 3'-to-5' exoribonuclease specific for small oligoribonucleotides. The sequence is that of Oligoribonuclease from Mycobacterium avium (strain 104).